A 558-amino-acid polypeptide reads, in one-letter code: Transcription factor RelB (558 aa).

A compositionally biased stretch (basic and acidic residues) spans 1–11; that stretch reads MPSRRAARESA. The disordered stretch occupies residues 1 to 21; sequence MPSRRAARESAPELGALGSSD. Ser-19 is modified (phosphoserine). The segment at 22–50 is leucine-zipper; sequence LSSLSLTVSRTTDELEIIDEYIKENGFGL. Thr-84 carries the phosphothreonine modification. Residues 103–418 enclose the RHD domain; it reads PYLVITEQPK…ESKRRKKKPV (316 aa). Short sequence motifs (nuclear localization signal) lie at residues 387–391 and 411–416; these read KKRKR and KRRKKK. Ser-552 is modified (phosphoserine).

In terms of assembly, component of the NF-kappa-B RelB-p50 complex. Component of the NF-kappa-B RelB-p52 complex. Self-associates; the interaction seems to be transient and may prevent degradation allowing for heterodimer formation p50 or p52. Interacts with NFKB1/p50, NFKB2/p52 and NFKB2/p100. Interacts with NFKBID. Interacts with BMAL1 and the interaction is enhanced in the presence of CLOCK. In terms of processing, phosphorylation at 'Thr-103' and 'Ser-573' is followed by proteasomal degradation. Expressed in intestine, thymus and spleen. Undetectable in liver, bome marrow, kidney and testis.

The protein resides in the nucleus. The protein localises to the cytoplasm. Its subcellular location is the cytoskeleton. It is found in the microtubule organizing center. It localises to the centrosome. Its function is as follows. NF-kappa-B is a pleiotropic transcription factor which is present in almost all cell types and is involved in many biological processed such as inflammation, immunity, differentiation, cell growth, tumorigenesis and apoptosis. NF-kappa-B is a homo- or heterodimeric complex formed by the Rel-like domain-containing proteins RELA/p65, RELB, NFKB1/p105, NFKB1/p50, REL and NFKB2/p52. The dimers bind at kappa-B sites in the DNA of their target genes and the individual dimers have distinct preferences for different kappa-B sites that they can bind with distinguishable affinity and specificity. Different dimer combinations act as transcriptional activators or repressors, respectively. NF-kappa-B is controlled by various mechanisms of post-translational modification and subcellular compartmentalization as well as by interactions with other cofactors or corepressors. NF-kappa-B complexes are held in the cytoplasm in an inactive state complexed with members of the NF-kappa-B inhibitor (I-kappa-B) family. In a conventional activation pathway, I-kappa-B is phosphorylated by I-kappa-B kinases (IKKs) in response to different activators, subsequently degraded thus liberating the active NF-kappa-B complex which translocates to the nucleus. NF-kappa-B heterodimeric RelB-p50 and RelB-p52 complexes are transcriptional activators. RELB neither associates with DNA nor with RELA/p65 or REL. Stimulates promoter activity in the presence of NFKB2/p49. As a member of the NUPR1/RELB/IER3 survival pathway, may allow the development of pancreatic intraepithelial neoplasias. Regulates the circadian clock by repressing the transcriptional activator activity of the CLOCK-BMAL1 heterodimer in a CRY1/CRY2 independent manner. Increased repression of the heterodimer is seen in the presence of NFKB2/p52. Is required for both T and B lymphocyte maturation and function. This chain is Transcription factor RelB (Relb), found in Mus musculus (Mouse).